We begin with the raw amino-acid sequence, 543 residues long: Gap junction alpha-10 protein (543 aa).

The Cytoplasmic portion of the chain corresponds to 1 to 16 (MGDWNLLGGILEEVHS). The helical transmembrane segment at 17-37 (HSTIVGKIWLTILFIFRMLVL) threads the bilayer. Topologically, residues 38–76 (RVAAEDVWDDEQSAFACNTRQPGCNNICYDDAFPISLIR) are extracellular. A helical transmembrane segment spans residues 77–97 (FWVLQIIFVSSPSLVYMGHAL). At 98–165 (YRLRAFEKDR…TYVLHILTRS (68 aa)) the chain is on the cytoplasmic side. Residues 166–186 (VLEVGFMIGQYILYGFQMHPL) form a helical membrane-spanning segment. Topologically, residues 187 to 209 (YKCTQPPCPNAVDCFVSRPTEKT) are extracellular. Residues 210 to 230 (IFMLFMHSIAAISLLLNILEI) traverse the membrane as a helical segment. At 231-543 (FHLGIRKIMR…HSIHSVKFNS (313 aa)) the chain is on the cytoplasmic side. Disordered regions lie at residues 306 to 359 (PQPR…SSFG) and 379 to 424 (PSFA…DRSR). A compositionally biased stretch (basic and acidic residues) spans 317-328 (NGKKDWSEKDQH). Over residues 344–359 (AGNQHLGQQSDHSSFG) the composition is skewed to polar residues. The segment covering 400-413 (TDLHSHCRDSEGSM) has biased composition (basic and acidic residues).

This sequence belongs to the connexin family. Alpha-type (group II) subfamily. As to quaternary structure, a connexon is composed of a hexamer of connexins. Expressed in skeletal muscle and heart.

Its subcellular location is the cell membrane. It localises to the cell junction. The protein resides in the gap junction. Functionally, one gap junction consists of a cluster of closely packed pairs of transmembrane channels, the connexons, through which materials of low MW diffuse from one cell to a neighboring cell. Involved in tracer coupling between horizontal cells of the retina. May play a role in the regulation of horizontal cell patterning. This chain is Gap junction alpha-10 protein (GJA10), found in Homo sapiens (Human).